Reading from the N-terminus, the 120-residue chain is Large ribosomal subunit protein bL17 (120 aa).

Belongs to the bacterial ribosomal protein bL17 family. Part of the 50S ribosomal subunit. Contacts protein L32.

The chain is Large ribosomal subunit protein bL17 from Mesomycoplasma hyopneumoniae (strain J / ATCC 25934 / NCTC 10110) (Mycoplasma hyopneumoniae).